The sequence spans 365 residues: Hematopoietic SH2 domain-containing protein homolog (365 aa).

In terms of domain architecture, SH2 spans 34 to 125 (WFHGIISRKA…PYNELLTVAC (92 aa)). 2 disordered regions span residues 199–278 (QSTD…QQKP) and 335–365 (AEHP…APGY). Over residues 257 to 277 (QQITPNTPNEGRTQQKNQQQK) the composition is skewed to polar residues.

In terms of biological role, may be an adapter protein involved in tyrosine kinase signaling. The chain is Hematopoietic SH2 domain-containing protein homolog (hsh2d) from Danio rerio (Zebrafish).